Consider the following 153-residue polypeptide: Putative pre-16S rRNA nuclease (153 aa).

The protein belongs to the YqgF nuclease family.

The protein resides in the cytoplasm. Its function is as follows. Could be a nuclease involved in processing of the 5'-end of pre-16S rRNA. The polypeptide is Putative pre-16S rRNA nuclease (Prochlorococcus marinus (strain MIT 9301)).